A 153-amino-acid chain; its full sequence is Cytochrome c-type biogenesis protein CcmE (153 aa).

Topologically, residues 1–8 (MTPVQRRR) are cytoplasmic. A helical; Signal-anchor for type II membrane protein transmembrane segment spans residues 9-29 (LVWVLLALLASGLATALVAMA). Residues 30–153 (LERNIAYLYT…DVPVTAPEVR (124 aa)) lie on the Periplasmic side of the membrane. Heme contacts are provided by histidine 123 and tyrosine 127.

The protein belongs to the CcmE/CycJ family.

It is found in the cell inner membrane. In terms of biological role, heme chaperone required for the biogenesis of c-type cytochromes. Transiently binds heme delivered by CcmC and transfers the heme to apo-cytochromes in a process facilitated by CcmF and CcmH. The chain is Cytochrome c-type biogenesis protein CcmE from Stenotrophomonas maltophilia (strain R551-3).